The chain runs to 88 residues: MGGASIWHWIVVGVIVMLLFGRGKVSELMGDVAKGIKAFKKGMADEDQPQAPVVAAPPVTATEPVRTLPPHPTEPAPATHATVDRKVV.

A helical membrane pass occupies residues 1-21; sequence MGGASIWHWIVVGVIVMLLFG. Positions 62–88 are disordered; that stretch reads TEPVRTLPPHPTEPAPATHATVDRKVV.

It belongs to the TatA/E family. In terms of assembly, the Tat system comprises two distinct complexes: a TatABC complex, containing multiple copies of TatA, TatB and TatC subunits, and a separate TatA complex, containing only TatA subunits. Substrates initially bind to the TatABC complex, which probably triggers association of the separate TatA complex to form the active translocon.

The protein resides in the cell inner membrane. Its function is as follows. Part of the twin-arginine translocation (Tat) system that transports large folded proteins containing a characteristic twin-arginine motif in their signal peptide across membranes. TatA could form the protein-conducting channel of the Tat system. The sequence is that of Sec-independent protein translocase protein TatA from Methylobacterium sp. (strain 4-46).